The chain runs to 144 residues: HTH-type transcriptional repressor NsrR (144 aa).

The HTH rrf2-type domain maps to 2–129 (QLTSFTDYGL…DKHTLLSLID (128 aa)). A DNA-binding region (H-T-H motif) is located at residues 28–51 (ISKVTEVYGVSRNHMVKIINKLGQ). [2Fe-2S] cluster is bound by residues Cys-91, Cys-96, and Cys-102.

[2Fe-2S] cluster serves as cofactor.

Nitric oxide-sensitive repressor of genes involved in protecting the cell against nitrosative stress. May require iron for activity. The polypeptide is HTH-type transcriptional repressor NsrR (Photobacterium profundum (strain SS9)).